Here is a 417-residue protein sequence, read N- to C-terminus: Serine hydroxymethyltransferase (417 aa).

(6S)-5,6,7,8-tetrahydrofolate contacts are provided by residues Leu-121 and 125 to 127; that span reads GHL. Lys-230 bears the N6-(pyridoxal phosphate)lysine mark. A (6S)-5,6,7,8-tetrahydrofolate-binding site is contributed by 355-357; sequence SPF.

This sequence belongs to the SHMT family. Homodimer. Requires pyridoxal 5'-phosphate as cofactor.

It is found in the cytoplasm. It carries out the reaction (6R)-5,10-methylene-5,6,7,8-tetrahydrofolate + glycine + H2O = (6S)-5,6,7,8-tetrahydrofolate + L-serine. It functions in the pathway one-carbon metabolism; tetrahydrofolate interconversion. The protein operates within amino-acid biosynthesis; glycine biosynthesis; glycine from L-serine: step 1/1. Catalyzes the reversible interconversion of serine and glycine with tetrahydrofolate (THF) serving as the one-carbon carrier. This reaction serves as the major source of one-carbon groups required for the biosynthesis of purines, thymidylate, methionine, and other important biomolecules. Also exhibits THF-independent aldolase activity toward beta-hydroxyamino acids, producing glycine and aldehydes, via a retro-aldol mechanism. The sequence is that of Serine hydroxymethyltransferase from Legionella pneumophila subsp. pneumophila (strain Philadelphia 1 / ATCC 33152 / DSM 7513).